Reading from the N-terminus, the 158-residue chain is Regulator of sigma D (158 aa).

This sequence belongs to the Rsd/AlgQ family. As to quaternary structure, interacts with RpoD.

The protein resides in the cytoplasm. Its function is as follows. Binds RpoD and negatively regulates RpoD-mediated transcription activation by preventing the interaction between the primary sigma factor RpoD with the catalytic core of the RNA polymerase and with promoter DNA. May be involved in replacement of the RNA polymerase sigma subunit from RpoD to RpoS during the transition from exponential growth to the stationary phase. The chain is Regulator of sigma D from Escherichia coli O127:H6 (strain E2348/69 / EPEC).